An 876-amino-acid polypeptide reads, in one-letter code: Probable DNA-directed RNA polymerase catalytic subunit (876 aa).

It belongs to the RNA polymerase beta chain family. As to quaternary structure, interacts with LEF-4, LEF-9, and p47.

It catalyses the reaction RNA(n) + a ribonucleoside 5'-triphosphate = RNA(n+1) + diphosphate. Its function is as follows. Component of the viral DNA-dependent RNA polymerase which is composed of four equimolar subunits of LEF-4, LEF-8, LEF-9, and p47. Plays an essential role in late and very late gene expression. The chain is Probable DNA-directed RNA polymerase catalytic subunit (LEF-8) from Autographa californica nuclear polyhedrosis virus (AcMNPV).